The following is a 607-amino-acid chain: Monocarboxylate transporter 7 (607 aa).

The tract at residues 1 to 84 is disordered; that stretch reads MRASGQGPQR…PAETGCSRSR (84 aa). Residues 1 to 105 lie on the Cytoplasmic side of the membrane; it reads MRASGQGPQR…ANVYTQVPDG (105 aa). Residues 106–126 form a helical membrane-spanning segment; sequence GWGWAVAVSFFFVEVFTYGII. The Extracellular portion of the chain corresponds to 127 to 146; sequence KSFGVFFNDLMDSFDESNSK. Residues 147–167 form a helical membrane-spanning segment; it reads ISWIISICVFVLTFTAPLSTV. At 168 to 175 the chain is on the cytoplasmic side; that stretch reads LSNRFGHR. Residues 176 to 196 traverse the membrane as a helical segment; it reads LVVMAGGLLISLGMITASFSQ. Topologically, residues 197–202 are extracellular; that stretch reads RVYHMY. A helical transmembrane segment spans residues 203–223; the sequence is ISIGVISGLGYCFSFLPTVTI. At 224–233 the chain is on the cytoplasmic side; sequence LSQYFDKRRS. Residues 234-254 form a helical membrane-spanning segment; it reads VVTAVASTGECFAVFAFAPAI. The Extracellular segment spans residues 255-268; that stretch reads TALKEHIGWRYSLL. A helical transmembrane segment spans residues 269–289; the sequence is FVGLLQLNIMVCGALLRPIII. Over 290 to 383 the chain is Cytoplasmic; the sequence is QGPGQSPKAV…KEKSFICYAL (94 aa). Residues Ser-319, Ser-322, Ser-325, and Ser-332 each carry the phosphoserine modification. A helical transmembrane segment spans residues 384–404; the sequence is FGLFATLGFFAPSLYIIPLGI. Residues 405–414 are Extracellular-facing; that stretch reads SLGIDPDRAA. Residues 415–435 traverse the membrane as a helical segment; sequence FLLSTMAIAEVFGRIGAGFVL. The Cytoplasmic segment spans residues 436-442; it reads NREPIRK. Residues 443-463 form a helical membrane-spanning segment; sequence IYIELICVILLTASLFAFTFA. The Extracellular portion of the chain corresponds to 464-465; it reads TE. The chain crosses the membrane as a helical span at residues 466–486; sequence FWGLMLCSVFFGSMVGTIGGT. Over 487–507 the chain is Cytoplasmic; it reads HIPMLAEDDVVGIEKMSSAAG. Residues 508 to 528 traverse the membrane as a helical segment; that stretch reads VYVFIQSISGLAGPPLAGLLV. Residues 529–536 are Extracellular-facing; that stretch reads DQSKIYSR. Residues 537–557 traverse the membrane as a helical segment; that stretch reads AFYSCAAGMCLAAVCLALVRP. At 558 to 607 the chain is on the cytoplasmic side; sequence CKKGLCQNSHSGENQTDRQRGKALQDIPEDFLEMDLGKCEHRAHMKMDPV.

Belongs to the major facilitator superfamily. Monocarboxylate porter (TC 2.A.1.13) family. Forms functional complexes with BSG/CD147 or EMB/GP70 ancillary proteins.

The protein localises to the basolateral cell membrane. The enzyme catalyses taurine(out) = taurine(in). Functionally, monocarboxylate transporter selective for taurine. May associate with BSG/CD147 or EMB/GP70 ancillary proteins to mediate facilitative efflux or influx of taurine across the plasma membrane. The transport is pH- and sodium-independent. Rather low-affinity, is likely effective for taurine transport in tissues where taurine is present at high concentrations. The sequence is that of Monocarboxylate transporter 7 from Mus musculus (Mouse).